Here is a 118-residue protein sequence, read N- to C-terminus: uncharacterized protein (118 aa).

This sequence belongs to the Lactobacillus delbrueckii bacteriophages ORF5 protein family.

This is an uncharacterized protein from Lactobacillus delbrueckii (Lactococcus delbrueckii bacteriophage LL-H).